A 181-amino-acid polypeptide reads, in one-letter code: Histone H1 (181 aa).

2 disordered regions span residues 1-23 and 81-181; these read MTET…THPP and TKGA…PKKK. Basic residues predominate over residues 8–19; sequence KPKKVSKPKAKP. An H15 domain is found at 20-94; that stretch reads THPPTSVMVM…GASGSFKLAA (75 aa). Basic residues-rich tracts occupy residues 103 to 119 and 145 to 181; these read AVAK…KAAA and KPKK…PKKK.

Belongs to the histone H1/H5 family.

The protein resides in the nucleus. It is found in the chromosome. In terms of biological role, histones H1 are necessary for the condensation of nucleosome chains into higher-order structures. The sequence is that of Histone H1 from Tigriopus californicus (Marine copepod).